A 140-amino-acid polypeptide reads, in one-letter code: MKHLIPLIVMASVVLAVYADRGYGGGRRGGGYGGGGYGGGGYGGGGGGYGGGVGGGRGGGGGLGGGRGGGGGVIDGKDDVGLGGGGYGGGLGGGQGGGGGLGGGQGGGGGLGGGRGGGGYGGGGGGYGGGKYGGGKYGGK.

The N-terminal stretch at Met-1–Ala-19 is a signal peptide. Gly-138 is modified (glycine amide).

The protein belongs to the glycine-rich peptide family. Expressed in hemocytes (at protein level).

It is found in the secreted. In terms of biological role, antimicrobial protein with bacteriostatic activity against the Gram-negative bacterium E.coli, and very weak activity against the Gram-positive bacterium S.aureus. Lacks activity against the yeast C.albicans. The protein is Ctenidin-1 of Cupiennius salei (American wandering spider).